The chain runs to 333 residues: 4-hydroxy-3-methylbut-2-enyl diphosphate reductase (333 aa).

Cys20 contributes to the [4Fe-4S] cluster binding site. (2E)-4-hydroxy-3-methylbut-2-enyl diphosphate contacts are provided by His49 and His85. Residues His49 and His85 each contribute to the dimethylallyl diphosphate site. His49 and His85 together coordinate isopentenyl diphosphate. Cys107 contacts [4Fe-4S] cluster. His135 contributes to the (2E)-4-hydroxy-3-methylbut-2-enyl diphosphate binding site. Residue His135 participates in dimethylallyl diphosphate binding. His135 contacts isopentenyl diphosphate. Glu137 (proton donor) is an active-site residue. A (2E)-4-hydroxy-3-methylbut-2-enyl diphosphate-binding site is contributed by Thr176. Cys206 provides a ligand contact to [4Fe-4S] cluster. 4 residues coordinate (2E)-4-hydroxy-3-methylbut-2-enyl diphosphate: Ser234, Ser235, Asn236, and Ser279. The dimethylallyl diphosphate site is built by Ser234, Ser235, Asn236, and Ser279. 4 residues coordinate isopentenyl diphosphate: Ser234, Ser235, Asn236, and Ser279.

The protein belongs to the IspH family. Requires [4Fe-4S] cluster as cofactor.

The catalysed reaction is isopentenyl diphosphate + 2 oxidized [2Fe-2S]-[ferredoxin] + H2O = (2E)-4-hydroxy-3-methylbut-2-enyl diphosphate + 2 reduced [2Fe-2S]-[ferredoxin] + 2 H(+). It carries out the reaction dimethylallyl diphosphate + 2 oxidized [2Fe-2S]-[ferredoxin] + H2O = (2E)-4-hydroxy-3-methylbut-2-enyl diphosphate + 2 reduced [2Fe-2S]-[ferredoxin] + 2 H(+). It functions in the pathway isoprenoid biosynthesis; dimethylallyl diphosphate biosynthesis; dimethylallyl diphosphate from (2E)-4-hydroxy-3-methylbutenyl diphosphate: step 1/1. It participates in isoprenoid biosynthesis; isopentenyl diphosphate biosynthesis via DXP pathway; isopentenyl diphosphate from 1-deoxy-D-xylulose 5-phosphate: step 6/6. Catalyzes the conversion of 1-hydroxy-2-methyl-2-(E)-butenyl 4-diphosphate (HMBPP) into a mixture of isopentenyl diphosphate (IPP) and dimethylallyl diphosphate (DMAPP). Acts in the terminal step of the DOXP/MEP pathway for isoprenoid precursor biosynthesis. The polypeptide is 4-hydroxy-3-methylbut-2-enyl diphosphate reductase (Rhizobium etli (strain CIAT 652)).